The primary structure comprises 267 residues: Small ribosomal subunit protein uS2 (267 aa).

The interval 247–267 is disordered; the sequence is LEDDILEDVEDEEEGDPEQGE.

Belongs to the universal ribosomal protein uS2 family.

This chain is Small ribosomal subunit protein uS2, found in Synechococcus sp. (strain JA-3-3Ab) (Cyanobacteria bacterium Yellowstone A-Prime).